A 49-amino-acid polypeptide reads, in one-letter code: MRVNITLECTSCHERTYLTSKNRRHNPDRLELNKYCPREQKVTLHRETK.

It belongs to the bacterial ribosomal protein bL33 family.

This Limosilactobacillus reuteri subsp. reuteri (strain JCM 1112) (Lactobacillus reuteri) protein is Large ribosomal subunit protein bL33B.